The following is a 257-amino-acid chain: tRNA pseudouridine synthase A (257 aa).

Aspartate 52 functions as the Nucleophile in the catalytic mechanism. Tyrosine 111 is a binding site for substrate.

Belongs to the tRNA pseudouridine synthase TruA family. As to quaternary structure, homodimer.

It carries out the reaction uridine(38/39/40) in tRNA = pseudouridine(38/39/40) in tRNA. In terms of biological role, formation of pseudouridine at positions 38, 39 and 40 in the anticodon stem and loop of transfer RNAs. The sequence is that of tRNA pseudouridine synthase A from Cereibacter sphaeroides (strain ATCC 17025 / ATH 2.4.3) (Rhodobacter sphaeroides).